The sequence spans 105 residues: Putative neurotoxin 10 (105 aa).

Residues 1–21 (MTVSCSKVLLSLCLFLMLLKA) form the signal peptide.

This sequence belongs to the scolopendra neurotoxin 10 family. Contains 3 disulfide bonds. As to expression, expressed by the venom gland.

It is found in the secreted. In Scolopendra subspinipes (Vietnamese centipede), this protein is Putative neurotoxin 10.